We begin with the raw amino-acid sequence, 454 residues long: MINIMEVTETNKMVEKENLDVRTITMGINLLDCAGPDLAEVNEKIYNKITTLAKDLVSTGEEIAKEFGVPIVNKRISITPISLVGSSACKTPEDYVTIAKTLDKAAHTVGVNFIGGYSAVVSKGMTKSDELLIRSIPQALAQTELICSSVNVGSTKTGINMDAVRLMGEIVKETAELTKDKDSLGCAKLVVLCNAPDDNPFMAGAFHGVTEDDAIINVGVSGPGVVKYALESVRGKSFEVLCETIKKTAFKITRVGQLVAQEASKRLGVPFGIIDLSLAPTPAVGDSVAEILEEIGLERAGAPGTTAALAMLNDQVKKGGVMASSYVGGLSGAFIPVSEDQGMIDAVNEGSLTIEKLEAMTCVCSVGLDMIAIPGDTPATTISGIIADEAAIGMVNQKTTAVRVIPVVGKGVGETVEFGGLLGYAPIMPVNKFDCSAFVNRVGRIPAPIHSFKN.

It belongs to the UPF0210 family. As to quaternary structure, homodimer.

The polypeptide is UPF0210 protein EUBELI_01067 (Lachnospira eligens (strain ATCC 27750 / DSM 3376 / VPI C15-48 / C15-B4) (Eubacterium eligens)).